The following is a 118-amino-acid chain: Large ribosomal subunit protein bL20 (118 aa).

This sequence belongs to the bacterial ribosomal protein bL20 family.

In terms of biological role, binds directly to 23S ribosomal RNA and is necessary for the in vitro assembly process of the 50S ribosomal subunit. It is not involved in the protein synthesizing functions of that subunit. The chain is Large ribosomal subunit protein bL20 from Shewanella baltica (strain OS223).